A 286-amino-acid polypeptide reads, in one-letter code: ATP phosphoribosyltransferase (286 aa).

It belongs to the ATP phosphoribosyltransferase family. Long subfamily. It depends on Mg(2+) as a cofactor.

It is found in the cytoplasm. The catalysed reaction is 1-(5-phospho-beta-D-ribosyl)-ATP + diphosphate = 5-phospho-alpha-D-ribose 1-diphosphate + ATP. It functions in the pathway amino-acid biosynthesis; L-histidine biosynthesis; L-histidine from 5-phospho-alpha-D-ribose 1-diphosphate: step 1/9. Feedback inhibited by histidine. In terms of biological role, catalyzes the condensation of ATP and 5-phosphoribose 1-diphosphate to form N'-(5'-phosphoribosyl)-ATP (PR-ATP). Has a crucial role in the pathway because the rate of histidine biosynthesis seems to be controlled primarily by regulation of HisG enzymatic activity. The polypeptide is ATP phosphoribosyltransferase (Paenarthrobacter aurescens (strain TC1)).